Reading from the N-terminus, the 244-residue chain is Phosphoadenosine 5'-phosphosulfate reductase (244 aa).

Catalysis depends on C239, which acts as the Nucleophile; cysteine thiosulfonate intermediate.

It belongs to the PAPS reductase family. CysH subfamily.

It is found in the cytoplasm. It catalyses the reaction [thioredoxin]-disulfide + sulfite + adenosine 3',5'-bisphosphate + 2 H(+) = [thioredoxin]-dithiol + 3'-phosphoadenylyl sulfate. The protein operates within sulfur metabolism; hydrogen sulfide biosynthesis; sulfite from sulfate: step 3/3. Functionally, catalyzes the formation of sulfite from phosphoadenosine 5'-phosphosulfate (PAPS) using thioredoxin as an electron donor. This is Phosphoadenosine 5'-phosphosulfate reductase from Buchnera aphidicola subsp. Acyrthosiphon pisum (strain 5A).